The sequence spans 589 residues: Muscarinic acetylcholine receptor M3 (589 aa).

The Extracellular portion of the chain corresponds to 1–66 (MTLHSNSTTS…DPLGGHTIWQ (66 aa)). N-linked (GlcNAc...) asparagine glycosylation is found at Asn6, Asn15, Asn41, Asn48, and Asn52. Residues 67–90 (VVFIAFLTGFLALVTIIGNILVIV) form a helical membrane-spanning segment. Residues 91 to 103 (AFKVNKQLKTVNN) lie on the Cytoplasmic side of the membrane. Residues 104 to 129 (YFLLSLACADLIIGVISMNLFTTYII) form a helical membrane-spanning segment. Residues 130–141 (MNRWALGNLACD) are Extracellular-facing. A disulfide bridge links Cys140 with Cys220. Residues 142-163 (LWLSIDYVASNASVMNLLVISF) form a helical membrane-spanning segment. Over 164–183 (DRYFSITRPLTYRAKRTTKR) the chain is Cytoplasmic. A helical transmembrane segment spans residues 184–205 (AGVMIGLAWVISFVLWAPAILF). Residues 206 to 228 (WQYFVGKRTVPPGECFIQFLSEP) lie on the Extracellular side of the membrane. Residues 229 to 251 (TITFGTAIAAFYMPVTIMTILYW) traverse the membrane as a helical segment. Residues 252-490 (RIYKETEKRT…SLIKEKKAAQ (239 aa)) are Cytoplasmic-facing. The Basolateral sorting signal signature appears at 274-280 (AEAENFV). A disordered region spans residues 323-356 (AEQMDQDHSSSDSWNNNDAAASLENSASSDEEDI). Over residues 333–344 (SDSWNNNDAAAS) the composition is skewed to low complexity. Position 384 is a phosphoserine (Ser384). The helical transmembrane segment at 491–513 (TLSAILLAFIITWTPYNIMVLVN) threads the bilayer. The Extracellular portion of the chain corresponds to 514 to 525 (TFCDSCIPKTYW). The cysteines at positions 516 and 519 are disulfide-linked. The helical transmembrane segment at 526-545 (NLGYWLCYINSTVNPVCYAL) threads the bilayer. The Cytoplasmic portion of the chain corresponds to 546–589 (CNKTFRTTFKTLLLCQCDKRKRRKQQYQQRQSVIFHKRVPEQAL).

It belongs to the G-protein coupled receptor 1 family. Muscarinic acetylcholine receptor subfamily. CHRM3 sub-subfamily. Homodimer; the dimers can form tetramers. Interacts with NALCN. Interacts with TMEM147.

Its subcellular location is the cell membrane. It is found in the postsynaptic cell membrane. The protein resides in the basolateral cell membrane. The protein localises to the endoplasmic reticulum membrane. In terms of biological role, the muscarinic acetylcholine receptor mediates various cellular responses, including inhibition of adenylate cyclase, breakdown of phosphoinositides and modulation of potassium channels through the action of G proteins. Primary transducing effect is Pi turnover. The chain is Muscarinic acetylcholine receptor M3 (Chrm3) from Rattus norvegicus (Rat).